Here is a 342-residue protein sequence, read N- to C-terminus: Mitochondrial sorting homolog (342 aa).

Topologically, residues 1 to 6 are mitochondrial intermembrane; the sequence is MTDRNE. The chain crosses the membrane as a helical span at residues 7 to 25; that stretch reads LIGVAIRVVAAAAVSFLSV. Topologically, residues 26–342 are cytoplasmic; it reads RYLVKYLDPN…AHLLVEETLD (317 aa). 124 to 131 provides a ligand contact to ATP; sequence GPPGCGKT.

The protein belongs to the AAA ATPase family.

It localises to the mitochondrion outer membrane. Functionally, involved in intramitochondrial sorting of proteins. This chain is Mitochondrial sorting homolog (mspn-1), found in Caenorhabditis elegans.